Reading from the N-terminus, the 333-residue chain is Probable G-protein coupled receptor 174 (333 aa).

At Met-1–Thr-27 the chain is on the extracellular side. N-linked (GlcNAc...) asparagine glycosylation is present at Asn-4. Residues Val-28 to Met-48 traverse the membrane as a helical segment. Residues Lys-49–Arg-53 are Cytoplasmic-facing. A helical transmembrane segment spans residues Ala-54 to Leu-74. Topologically, residues Arg-75–Cys-91 are extracellular. A disulfide bridge links Cys-91 with Cys-168. The chain crosses the membrane as a helical span at residues Met-92–Ile-112. Topologically, residues Ser-113–Asp-134 are cytoplasmic. Residues Leu-135–Leu-155 form a helical membrane-spanning segment. Topologically, residues Arg-156–Ser-182 are extracellular. A glycan (N-linked (GlcNAc...) asparagine) is linked at Asn-164. Residues Val-183–Tyr-203 form a helical membrane-spanning segment. Over Cys-204–Met-231 the chain is Cytoplasmic. Residues Ile-232 to Leu-252 form a helical membrane-spanning segment. Over Asp-253 to Val-269 the chain is Extracellular. A helical transmembrane segment spans residues Ile-270–Val-290. The Cytoplasmic segment spans residues Ile-291–Cys-333.

It belongs to the G-protein coupled receptor 1 family. Interacts with GNA13. Interacts with CCL21.

The protein resides in the cell membrane. Its function is as follows. G-protein-coupled receptor of lysophosphatidylserine (LysoPS) that plays different roles in immune response. Plays a negative role in regulatory T-cell accumulation and homeostasis. Under inflammatory conditions where LysoPS production increases, contributes to the down-regulation of regulatory T-cell activity to favor effector response. Mediates the suppression of IL-2 production in activated T-lymphocytes leading to inhibition of growth, proliferation and differentiation of T-cells. Mechanistically, acts via G(s)-containing heterotrimeric G proteins to trigger elevated cyclic AMP levels and protein kinase A/PKA activity, which may in turn act to antagonize proximal TCR signaling. Plays an important role in the initial period of sepsis through the regulation of macrophage polarization and pro- and anti-inflammatory cytokine secretions. Upon testosterone treatment, acts as a receptor for CCL21 and subsequently triggers through G(q)-alpha and G(12)/G(13) proteins a calcium flux leading to chemotactic effects on activated B-cells. Signals via GNA13 and PKA to promote CD86 up-regulation by follicular B-cells. In Homo sapiens (Human), this protein is Probable G-protein coupled receptor 174 (GPR174).